The chain runs to 412 residues: 1-deoxy-D-xylulose 5-phosphate reductoisomerase (412 aa).

NADPH is bound by residues T5, G6, S7, I8, G31, N33, and N125. K126 contacts 1-deoxy-D-xylulose 5-phosphate. Residue E127 coordinates NADPH. D151 is a Mn(2+) binding site. Residues S152, E153, S189, and H212 each contribute to the 1-deoxy-D-xylulose 5-phosphate site. E153 serves as a coordination point for Mn(2+). Residue G218 coordinates NADPH. The 1-deoxy-D-xylulose 5-phosphate site is built by S225, N230, K231, and E234. Position 234 (E234) interacts with Mn(2+).

It belongs to the DXR family. Mg(2+) is required as a cofactor. It depends on Mn(2+) as a cofactor.

It catalyses the reaction 2-C-methyl-D-erythritol 4-phosphate + NADP(+) = 1-deoxy-D-xylulose 5-phosphate + NADPH + H(+). Its pathway is isoprenoid biosynthesis; isopentenyl diphosphate biosynthesis via DXP pathway; isopentenyl diphosphate from 1-deoxy-D-xylulose 5-phosphate: step 1/6. Its function is as follows. Catalyzes the NADPH-dependent rearrangement and reduction of 1-deoxy-D-xylulose-5-phosphate (DXP) to 2-C-methyl-D-erythritol 4-phosphate (MEP). This Prochlorococcus marinus (strain MIT 9313) protein is 1-deoxy-D-xylulose 5-phosphate reductoisomerase.